Consider the following 473-residue polypeptide: Uronate isomerase (473 aa).

This sequence belongs to the metallo-dependent hydrolases superfamily. Uronate isomerase family.

It catalyses the reaction D-glucuronate = D-fructuronate. It carries out the reaction aldehydo-D-galacturonate = keto-D-tagaturonate. The protein operates within carbohydrate metabolism; pentose and glucuronate interconversion. In Bacillus licheniformis (strain ATCC 14580 / DSM 13 / JCM 2505 / CCUG 7422 / NBRC 12200 / NCIMB 9375 / NCTC 10341 / NRRL NRS-1264 / Gibson 46), this protein is Uronate isomerase.